The following is a 544-amino-acid chain: WD repeat-containing protein 25 (544 aa).

2 disordered regions span residues 17 to 74 (DSDS…EDPG) and 183 to 208 (QRQALSTETGKGKDVEPQGPPAGRAP). The span at 30–39 (FNATGQQKDT) shows a compositional bias: polar residues. WD repeat units lie at residues 244–286 (GHRG…HCLQ), 290–329 (LHTEAVRAARWAPCGRRILSGGFDFALHLTDLETGTQLFS), 330–373 (GRSD…RSYK), 375–420 (TIQQ…KISN), 424–463 (HERFTCPSLALHPREPVFLAQTNGNYLALFSTVWPYRMSR), 469–510 (GHKV…RACT), and 513–544 (GHTQACVGTTYHPVLPSVLATCSWGGDMKIWH).

Expressed in heart, muscle, testis, ovary, uterus and prostate.

The sequence is that of WD repeat-containing protein 25 from Homo sapiens (Human).